The chain runs to 78 residues: UPF0335 protein RBE_1185 (78 aa).

It belongs to the UPF0335 family.

The chain is UPF0335 protein RBE_1185 from Rickettsia bellii (strain RML369-C).